The chain runs to 880 residues: DNA polymerase I (880 aa).

The region spanning threonine 174–arginine 268 is the 5'-3' exonuclease domain. In terms of domain architecture, 3'-5' exonuclease spans aspartate 302–glutamate 470.

This sequence belongs to the DNA polymerase type-A family. Single-chain monomer with multiple functions.

The enzyme catalyses DNA(n) + a 2'-deoxyribonucleoside 5'-triphosphate = DNA(n+1) + diphosphate. Functionally, in addition to polymerase activity, this DNA polymerase exhibits 3'-5' and 5'-3' exonuclease activity. The protein is DNA polymerase I (polA) of Bacillus subtilis (strain 168).